The following is a 392-amino-acid chain: PFADDLAVLVEGDSRAEIEKVGKAVVKHIVERCSAIKLEVSESKTVGIFVKKPKVVGSKAVKINRKDCRKGGARNLKIELGGKSISFEQSVRYLGVHFDANLGISAHCKYLREKLVPLFSDLRKLAQCQWGLGHKALETIYKGVFVPTVCYASARWYKEGAHTDRILEDLHRQILIAITRCYRSTSYEAACVLAGTLPICIQLRVSVAKYHLRKGEDAEIGGVVIRRRPEGLKENYNRVLEVANEMWQARWEASEQGNATRELFFPDVVARVKSDWIRPDHFTSQVLTGHGYYNEKLHQLSLAKAAACICCGEPDNNLHFLLECPAFAEFRDELITPVSGGLEAPEATLMLVSSPEGFAALKEYSRVAFECKRQLENALTESDEGLSSESEE.

A Reverse transcriptase domain is found at Pro1 to Glu230. The tract at residues Gly231–Glu392 is nucleic acid-binding endonuclease.

The enzyme catalyses DNA(n) + a 2'-deoxyribonucleoside 5'-triphosphate = DNA(n+1) + diphosphate. This Nasonia vitripennis (Parasitic wasp) protein is Retrovirus-related Pol polyprotein from type-1 retrotransposable element R1 4.